The following is a 179-amino-acid chain: MLEQSAQITLFVLDFFIFVGALGVVFFNNIIYSALFLGLTFLSVALLYLLLGSEFLSVAQVIIYVGAINVLIVFAIMLVNKPEFDKKDMIWVPIDLKSFCVNFILFSTIVTMIVTTPWKLLVNNIDVKLNSLNFLSPIAKIGYQFLSTLVLPFELLSLLLLIALIGAVIIARRELIEDT.

5 helical membrane passes run 8-28, 30-50, 58-78, 98-118, and 150-170; these read ITLF…VFFN, IIYS…LYLL, VAQV…AIML, SFCV…TTPW, and VLPF…AVII.

It belongs to the complex I subunit 6 family. NDH is composed of at least 16 different subunits, 5 of which are encoded in the nucleus.

The protein localises to the plastid. The protein resides in the chloroplast thylakoid membrane. It carries out the reaction a plastoquinone + NADH + (n+1) H(+)(in) = a plastoquinol + NAD(+) + n H(+)(out). The enzyme catalyses a plastoquinone + NADPH + (n+1) H(+)(in) = a plastoquinol + NADP(+) + n H(+)(out). NDH shuttles electrons from NAD(P)H:plastoquinone, via FMN and iron-sulfur (Fe-S) centers, to quinones in the photosynthetic chain and possibly in a chloroplast respiratory chain. The immediate electron acceptor for the enzyme in this species is believed to be plastoquinone. Couples the redox reaction to proton translocation, and thus conserves the redox energy in a proton gradient. The protein is NAD(P)H-quinone oxidoreductase subunit 6, chloroplastic (ndhG) of Chaetosphaeridium globosum (Charophycean green alga).